The following is a 319-amino-acid chain: Sulfate adenylyltransferase subunit 2 (319 aa).

Belongs to the PAPS reductase family. CysD subfamily. As to quaternary structure, heterodimer composed of CysD, the smaller subunit, and CysN.

It catalyses the reaction sulfate + ATP + H(+) = adenosine 5'-phosphosulfate + diphosphate. It functions in the pathway sulfur metabolism; hydrogen sulfide biosynthesis; sulfite from sulfate: step 1/3. In terms of biological role, with CysN forms the ATP sulfurylase (ATPS) that catalyzes the adenylation of sulfate producing adenosine 5'-phosphosulfate (APS) and diphosphate, the first enzymatic step in sulfur assimilation pathway. APS synthesis involves the formation of a high-energy phosphoric-sulfuric acid anhydride bond driven by GTP hydrolysis by CysN coupled to ATP hydrolysis by CysD. The polypeptide is Sulfate adenylyltransferase subunit 2 (Methylobacterium radiotolerans (strain ATCC 27329 / DSM 1819 / JCM 2831 / NBRC 15690 / NCIMB 10815 / 0-1)).